Here is a 374-residue protein sequence, read N- to C-terminus: Cobalt-precorrin-5B C(1)-methyltransferase (374 aa).

It belongs to the CbiD family.

It carries out the reaction Co-precorrin-5B + S-adenosyl-L-methionine = Co-precorrin-6A + S-adenosyl-L-homocysteine. It participates in cofactor biosynthesis; adenosylcobalamin biosynthesis; cob(II)yrinate a,c-diamide from sirohydrochlorin (anaerobic route): step 6/10. Catalyzes the methylation of C-1 in cobalt-precorrin-5B to form cobalt-precorrin-6A. The protein is Cobalt-precorrin-5B C(1)-methyltransferase of Synechococcus elongatus (strain ATCC 33912 / PCC 7942 / FACHB-805) (Anacystis nidulans R2).